The following is a 356-amino-acid chain: Putative methylthioribose-1-phosphate isomerase (356 aa).

Substrate is bound by residues 57-59 (RGA), arginine 100, and glutamine 206. Catalysis depends on aspartate 247, which acts as the Proton donor. 257-258 (NK) is a binding site for substrate.

It belongs to the eIF-2B alpha/beta/delta subunits family. MtnA subfamily.

The enzyme catalyses 5-(methylsulfanyl)-alpha-D-ribose 1-phosphate = 5-(methylsulfanyl)-D-ribulose 1-phosphate. Functionally, catalyzes the interconversion of methylthioribose-1-phosphate (MTR-1-P) into methylthioribulose-1-phosphate (MTRu-1-P). This is Putative methylthioribose-1-phosphate isomerase (aIF-2BI) from Pyrococcus abyssi (strain GE5 / Orsay).